Reading from the N-terminus, the 310-residue chain is Putative S-adenosyl-L-methionine-dependent methyltransferase MMAR_3534 (310 aa).

S-adenosyl-L-methionine-binding positions include aspartate 131 and 160 to 161 (DL).

This sequence belongs to the UPF0677 family.

In terms of biological role, exhibits S-adenosyl-L-methionine-dependent methyltransferase activity. The sequence is that of Putative S-adenosyl-L-methionine-dependent methyltransferase MMAR_3534 from Mycobacterium marinum (strain ATCC BAA-535 / M).